The following is a 1430-amino-acid chain: Transport and Golgi organization protein 1 (1430 aa).

Residues 1–34 (MRLTNEKATMQPQLSDLALVLGLLICCLPTLTWA) form the signal peptide. At 35-796 (ATLSDKRLCA…ADKLVDHSQL (762 aa)) the chain is on the extracellular side. Residues 50–112 (QIISMGIAKI…NKDFIMEKKI (63 aa)) form the SH3 domain. 5 disordered regions span residues 253 to 272 (QEEP…PPLP), 284 to 303 (DFDY…SQDN), 318 to 362 (ESIE…SLPT), 445 to 524 (SDAE…DQQK), and 568 to 673 (EEAE…TDNH). Acidic residues predominate over residues 284-296 (DFDYGDDETDDDS). Composition is skewed to basic and acidic residues over residues 331–357 (KKTD…KQED), 497–524 (LQEE…DQQK), and 568–588 (EEAE…RSSE). Residues 494 to 620 (YKQLQEEQEK…QSNEIVDNNN (127 aa)) are a coiled coil. The span at 594-621 (LSVQEANMQQLNDSVDSQSNEIVDNNNR) shows a compositional bias: polar residues. Positions 640 to 651 (HPSTASHTTPTP) are enriched in low complexity. The chain crosses the membrane as a helical span at residues 797 to 817 (LLCVVIAAISSLFFMFAYYCF). Residues 818–1430 (CNSSQEGALL…SATSRPYSEV (613 aa)) lie on the Cytoplasmic side of the membrane. 2 positions are modified to phosphoserine: S865 and S868. Positions 869–1245 (NDMVADLKKQ…SLRRKLTTMA (377 aa)) form a coiled coil. Low complexity predominate over residues 1105-1114 (SQLQQSSQDV). Disordered stretches follow at residues 1105–1126 (SQLQ…QSER) and 1312–1430 (LPPT…YSEV). Over residues 1115–1126 (EQLKQDFNQSER) the composition is skewed to basic and acidic residues. A compositionally biased stretch (pro residues) spans 1321-1334 (RPPPLGRMRSPPPS). Positions 1336-1346 (RGDRDRERYSD) are enriched in basic and acidic residues. S1345 and S1348 each carry phosphoserine. Over residues 1348-1361 (SDYDDYDDDEEDDR) the composition is skewed to acidic residues. Residues 1364–1380 (DRRRRHSGSWGRRHRGS) show a composition bias toward basic residues. Polar residues predominate over residues 1387–1402 (TYRSLSPSDSRYNYND). Residues S1390 and S1392 each carry the phosphoserine modification. Over residues 1408 to 1417 (SPPPSPPPVP) the composition is skewed to pro residues. Residues 1420-1430 (RSATSRPYSEV) are compositionally biased toward polar residues.

It belongs to the MIA/OTOR family. Tango1 subfamily.

It is found in the golgi apparatus membrane. Its subcellular location is the golgi apparatus. It localises to the trans-Golgi network. Required for protein secretion. May participate in cargo loading by binding to COPII coat subunits and guiding SH3-bound proteins into a growing carrier. At basal transitional ER sites in follicle epithelial cells, mediates the exit of basal membrane protein such as vkg, LanB1 and Trol, from the endoplasmic reticulum (ER) to basal Golgi clusters. This chain is Transport and Golgi organization protein 1, found in Drosophila melanogaster (Fruit fly).